Here is a 455-residue protein sequence, read N- to C-terminus: Gamma-glutamyl phosphate reductase (455 aa).

This sequence belongs to the gamma-glutamyl phosphate reductase family.

Its subcellular location is the cytoplasm. It carries out the reaction L-glutamate 5-semialdehyde + phosphate + NADP(+) = L-glutamyl 5-phosphate + NADPH + H(+). It participates in amino-acid biosynthesis; L-proline biosynthesis; L-glutamate 5-semialdehyde from L-glutamate: step 2/2. Its function is as follows. Catalyzes the NADPH-dependent reduction of L-glutamate 5-phosphate into L-glutamate 5-semialdehyde and phosphate. The product spontaneously undergoes cyclization to form 1-pyrroline-5-carboxylate. This is Gamma-glutamyl phosphate reductase from Synechococcus sp. (strain JA-3-3Ab) (Cyanobacteria bacterium Yellowstone A-Prime).